The chain runs to 108 residues: UPF0145 protein LGAS_1099 (108 aa).

It belongs to the UPF0145 family.

This Lactobacillus gasseri (strain ATCC 33323 / DSM 20243 / BCRC 14619 / CIP 102991 / JCM 1131 / KCTC 3163 / NCIMB 11718 / NCTC 13722 / AM63) protein is UPF0145 protein LGAS_1099.